A 510-amino-acid chain; its full sequence is Calcium-dependent lipid-binding protein (510 aa).

The helical transmembrane segment at 1-21 (MGLISGILFGIIFGVALMAGW) threads the bilayer. SMP-LTD domains follow at residues 66 to 248 (AFEQ…VPIG) and 66 to 250 (AFEQ…IGGI). The segment at 226 to 488 (DDTVDTIVKD…FMGRTITGQS (263 aa)) is phospholipid binding. 2 consecutive C2 domains span residues 242–362 (RIVV…ELEL) and 246–364 (PIGG…ELNL). The Ca(2+) site is built by Lys278, Glu279, Asp285, Asp333, Lys334, Asp335, Asp339, and Glu340. The stretch at 390–417 (EFNKEEQMAALEDEKKIMEERKRLKEAG) forms a coiled coil. In terms of domain architecture, C2 3 spans 461–500 (MVGSGFGAVGSGLSKAGRFMGRTITGQSSKRSGSSTPVNT). A disordered region spans residues 484–510 (ITGQSSKRSGSSTPVNTVPENDGAKQQ).

The protein belongs to the synaptotagmin family. Interacts with the biotrophic pathogenic fungi Microbotryum violaceum effector MVLG_01732. It depends on Ca(2+) as a cofactor. In terms of tissue distribution, mostly expressed in rosette leaves and flowers, to lower extent, in cauline leaves, roots and stems, and, at low levels, in siliques.

Its subcellular location is the nucleus membrane. May be involved in membrane trafficking. Acts as a repressor of abiotic stress (e.g. drought and salt) responses by binding specifically to the promoter of THAS1 to regulate its transcription. Binds to membrane lipid ceramides. The chain is Calcium-dependent lipid-binding protein from Arabidopsis thaliana (Mouse-ear cress).